A 393-amino-acid polypeptide reads, in one-letter code: MQQTKKLTHSDITIAVMSGPFLQRGEPALVSKWYRTKMALACGVDLVVELPYAFSTQKAETFANGAISILNALHVSEICFGSEDGQIENFYNTVSAQKNEEETFNRLVKQFMNAGNSYAKATSEAFLHILSSEKNIDMSQPNNILGFQYIKAILMQNSSMQAQTIKRFASHYHDETFNDQHIASATSIRKQLFSENSSFTEIESFIPKATASLLASYKQNYGTLHNWEQYFSFFKYKLMTMSPEDLRHIYEIEEGLEHRILSKIQTSSSFHLFMEALKTKRYTWTRLQRACTHILTNTTKEEIHCANIEQHAPYIRLLGMSQKGQTYLSKNKKKIELPILTHTKTFDHPTLHIERKANSVYFSIMKEPLRTQLLKRDATHHPIRYDETTAKFL.

Positions 81, 142, and 167 each coordinate ATP.

This sequence belongs to the TmcAL family.

It is found in the cytoplasm. It carries out the reaction cytidine(34) in elongator tRNA(Met) + acetate + ATP = N(4)-acetylcytidine(34) in elongator tRNA(Met) + AMP + diphosphate. Catalyzes the formation of N(4)-acetylcytidine (ac(4)C) at the wobble position of elongator tRNA(Met), using acetate and ATP as substrates. First activates an acetate ion to form acetyladenylate (Ac-AMP) and then transfers the acetyl group to tRNA to form ac(4)C34. In Bacillus thuringiensis (strain Al Hakam), this protein is tRNA(Met) cytidine acetate ligase.